Here is a 184-residue protein sequence, read N- to C-terminus: Large ribosomal subunit protein bL17 (184 aa).

Positions 126–184 (TRAARAAASKQTADEAQVEETPAEEVTEETAAEETTEAAQADEAPAEEAPVEEKKDEEK) are disordered. The span at 141-161 (AQVEETPAEEVTEETAAEETT) shows a compositional bias: acidic residues.

The protein belongs to the bacterial ribosomal protein bL17 family. Part of the 50S ribosomal subunit. Contacts protein L32.

This is Large ribosomal subunit protein bL17 from Corynebacterium efficiens (strain DSM 44549 / YS-314 / AJ 12310 / JCM 11189 / NBRC 100395).